The following is a 309-amino-acid chain: Aspartate carbamoyltransferase catalytic subunit (309 aa).

Carbamoyl phosphate contacts are provided by arginine 55 and threonine 56. Lysine 85 is an L-aspartate binding site. Carbamoyl phosphate contacts are provided by arginine 106, histidine 135, and glutamine 138. Residues arginine 168 and arginine 230 each contribute to the L-aspartate site. Leucine 268 and proline 269 together coordinate carbamoyl phosphate.

It belongs to the aspartate/ornithine carbamoyltransferase superfamily. ATCase family. In terms of assembly, heterododecamer (2C3:3R2) of six catalytic PyrB chains organized as two trimers (C3), and six regulatory PyrI chains organized as three dimers (R2).

The catalysed reaction is carbamoyl phosphate + L-aspartate = N-carbamoyl-L-aspartate + phosphate + H(+). It functions in the pathway pyrimidine metabolism; UMP biosynthesis via de novo pathway; (S)-dihydroorotate from bicarbonate: step 2/3. Its function is as follows. Catalyzes the condensation of carbamoyl phosphate and aspartate to form carbamoyl aspartate and inorganic phosphate, the committed step in the de novo pyrimidine nucleotide biosynthesis pathway. The polypeptide is Aspartate carbamoyltransferase catalytic subunit (Photobacterium profundum (strain SS9)).